The chain runs to 92 residues: Small ribosomal subunit protein uS19c (92 aa).

This sequence belongs to the universal ribosomal protein uS19 family.

It is found in the plastid. Its subcellular location is the chloroplast. Functionally, protein S19 forms a complex with S13 that binds strongly to the 16S ribosomal RNA. This is Small ribosomal subunit protein uS19c from Angiopteris evecta (Mule's foot fern).